A 294-amino-acid chain; its full sequence is Ribosomal protein L11 methyltransferase (294 aa).

The S-adenosyl-L-methionine site is built by Thr145, Gly167, Asp189, and Asn230.

The protein belongs to the methyltransferase superfamily. PrmA family.

The protein localises to the cytoplasm. The catalysed reaction is L-lysyl-[protein] + 3 S-adenosyl-L-methionine = N(6),N(6),N(6)-trimethyl-L-lysyl-[protein] + 3 S-adenosyl-L-homocysteine + 3 H(+). Methylates ribosomal protein L11. The chain is Ribosomal protein L11 methyltransferase from Alkalilimnicola ehrlichii (strain ATCC BAA-1101 / DSM 17681 / MLHE-1).